The chain runs to 217 residues: Germin-like protein subfamily 1 member 1 (217 aa).

The signal sequence occupies residues 1 to 18; the sequence is MILNILLTLTLLMGRVKS. An intrachain disulfide couples cysteine 27 to cysteine 45. The region spanning 59 to 209 is the Cupin type-1 domain; the sequence is SALSRPGNTK…AYDINGQDVA (151 aa). The N-linked (GlcNAc...) asparagine glycan is linked to asparagine 75. Mn(2+)-binding residues include histidine 108, histidine 110, glutamate 115, and histidine 154.

The protein belongs to the germin family. Oligomer (believed to be a pentamer but probably hexamer).

It localises to the secreted. Its subcellular location is the extracellular space. It is found in the apoplast. Its function is as follows. May play a role in plant defense. Probably has no oxalate oxidase activity even if the active site is conserved. The sequence is that of Germin-like protein subfamily 1 member 1 (GLP7) from Arabidopsis thaliana (Mouse-ear cress).